Reading from the N-terminus, the 173-residue chain is Crossover junction endodeoxyribonuclease RuvC (173 aa).

Catalysis depends on residues Asp8, Glu67, and Asp139. The Mg(2+) site is built by Asp8, Glu67, and Asp139.

The protein belongs to the RuvC family. In terms of assembly, homodimer which binds Holliday junction (HJ) DNA. The HJ becomes 2-fold symmetrical on binding to RuvC with unstacked arms; it has a different conformation from HJ DNA in complex with RuvA. In the full resolvosome a probable DNA-RuvA(4)-RuvB(12)-RuvC(2) complex forms which resolves the HJ. It depends on Mg(2+) as a cofactor.

The protein localises to the cytoplasm. The catalysed reaction is Endonucleolytic cleavage at a junction such as a reciprocal single-stranded crossover between two homologous DNA duplexes (Holliday junction).. The RuvA-RuvB-RuvC complex processes Holliday junction (HJ) DNA during genetic recombination and DNA repair. Endonuclease that resolves HJ intermediates. Cleaves cruciform DNA by making single-stranded nicks across the HJ at symmetrical positions within the homologous arms, yielding a 5'-phosphate and a 3'-hydroxyl group; requires a central core of homology in the junction. The consensus cleavage sequence is 5'-(A/T)TT(C/G)-3'. Cleavage occurs on the 3'-side of the TT dinucleotide at the point of strand exchange. HJ branch migration catalyzed by RuvA-RuvB allows RuvC to scan DNA until it finds its consensus sequence, where it cleaves and resolves the cruciform DNA. The sequence is that of Crossover junction endodeoxyribonuclease RuvC from Shewanella piezotolerans (strain WP3 / JCM 13877).